The following is a 984-amino-acid chain: Serine/threonine-protein kinase N2 (984 aa).

Position 21 is a phosphoserine (S21). Positions 33 to 109 constitute an REM-1 1 domain; that stretch reads KLDFSDTMVQ…LQELNAHIVV (77 aa). K77 is subject to N6-acetyllysine. Phosphoserine is present on S110. Residues 114–133 form a disordered region; sequence DITDCPRTPDTPNNDPRCST. Phosphothreonine is present on residues T121 and T124. 2 consecutive REM-1 domains span residues 121-203 and 204-284; these read TPDT…TNEL and AFDN…EVPK. The span at 123–133 shows a compositional bias: polar residues; the sequence is DTPNNDPRCST. S302, S306, S360, and S362 each carry phosphoserine. Residues 351 to 383 are disordered; sequence ATSVALPGWSPSETRSSFMSRTSKSKSGSSRNL. The 121-residue stretch at 353-473 folds into the C2 domain; the sequence is SVALPGWSPS…LYLEPQGTLF (121 aa). The span at 364–381 shows a compositional bias: low complexity; sequence TRSSFMSRTSKSKSGSSR. The tract at residues 382-463 is necessary to rescue apical junction formation; that stretch reads NLLKTDDLSN…FLDNQRHGMC (82 aa). Phosphoserine occurs at positions 535, 583, and 620. Positions 558-584 are disordered; sequence ASDSTVTKLDFDLEPEPPPAPPRASSL. The residue at position 628 (T628) is a Phosphothreonine. At S631 the chain carries Phosphoserine. Residues 657 to 916 enclose the Protein kinase domain; it reads FRCCAVLGRG…AEDVKKHPFF (260 aa). ATP-binding positions include 663-671 and K686; that span reads LGRGHFGKV. D782 (proton acceptor) is an active-site residue. Position 816 is a phosphothreonine; by PDPK1 (T816). Residues 917–977 form a necessary for the catalytic activity region; it reads RLIDWSALMD…EEEQEMFRDF (61 aa). In terms of domain architecture, AGC-kinase C-terminal spans 917–984; sequence RLIDWSALMD…RDFDYIADWC (68 aa). S952 is subject to Phosphoserine. The residue at position 958 (T958) is a Phosphothreonine. The tract at residues 978-984 is negatively regulates the responsiveness of the catalytic activity by cardiolipin and is required for optimal activation by the GTP-bound RhoA; that stretch reads DYIADWC.

It belongs to the protein kinase superfamily. AGC Ser/Thr protein kinase family. PKC subfamily. As to quaternary structure, interacts (via the REM repeats) with RHOA (GTP-bound form preferentially) and interacts (via the REM repeats) with RAC1 (GTP-bound form preferentially); the interactions induce its autophosphorylation. Interacts with RHOC. Interacts with NCK1 and NCK2. Interacts with NCK1 (via SH3 domains). Interacts with CD44. Interacts (via C-terminal kinase domain) with PDPK1; the interaction stimulates PDPK1 kinase activity. Interacts with MAP3K2; the interaction activates PRK2 kinase activity in a MAP3K2-independent kinase activity. Interacts (via C-terminal domain) with AKT1; the interaction occurs with the C-terminal cleavage product of PRK2 in apoptotic cells. Interacts (via C-terminus) with PTPN13 (via PDZ 3 domain). Interacts with CDK10. (Microbial infection) Interacts with HCV NS5B (via N-terminal finger domain). In terms of processing, autophosphorylated. Phosphorylated during mitosis. Phosphorylated by CDK10. Activated by limited proteolysis with trypsin. Proteolytically cleaved by caspase-3 during the induction of apoptotic cell death. As to expression, ubiquitous. Expressed in numerous tumor cell lines, especially in bladder tumor cells.

The protein resides in the cytoplasm. The protein localises to the nucleus. It is found in the membrane. Its subcellular location is the cell projection. It localises to the lamellipodium. The protein resides in the cytoskeleton. The protein localises to the cleavage furrow. It is found in the midbody. Its subcellular location is the cell junction. The catalysed reaction is L-seryl-[protein] + ATP = O-phospho-L-seryl-[protein] + ADP + H(+). It catalyses the reaction L-threonyl-[protein] + ATP = O-phospho-L-threonyl-[protein] + ADP + H(+). With respect to regulation, kinase activity is activated upon binding to GTP-bound Rhoa/Rac1 GTPases. Activated by caspase-3 (CASP3) cleavage during apoptosis. Activated by lipids, particularly cardiolipin and to a lesser extent by other acidic phospholipids and unsaturated fatty acids. Two specific sites, Thr-816 (activation loop of the kinase domain) and Thr-958 (turn motif), need to be phosphorylated for its full activation. In terms of biological role, PKC-related serine/threonine-protein kinase and Rho/Rac effector protein that participates in specific signal transduction responses in the cell. Plays a role in the regulation of cell cycle progression, actin cytoskeleton assembly, cell migration, cell adhesion, tumor cell invasion and transcription activation signaling processes. Phosphorylates CTTN in hyaluronan-induced astrocytes and hence decreases CTTN ability to associate with filamentous actin. Phosphorylates HDAC5, therefore lead to impair HDAC5 import. Direct RhoA target required for the regulation of the maturation of primordial junctions into apical junction formation in bronchial epithelial cells. Required for G2/M phases of the cell cycle progression and abscission during cytokinesis in a ECT2-dependent manner. Stimulates FYN kinase activity that is required for establishment of skin cell-cell adhesion during keratinocytes differentiation. Regulates epithelial bladder cells speed and direction of movement during cell migration and tumor cell invasion. Inhibits Akt pro-survival-induced kinase activity. Mediates Rho protein-induced transcriptional activation via the c-fos serum response factor (SRF). Involved in the negative regulation of ciliogenesis. (Microbial infection) Phosphorylates HCV NS5B leading to stimulation of HCV RNA replication. The sequence is that of Serine/threonine-protein kinase N2 (PKN2) from Homo sapiens (Human).